The sequence spans 133 residues: Ribosome-binding factor A (133 aa).

The protein belongs to the RbfA family. Monomer. Binds 30S ribosomal subunits, but not 50S ribosomal subunits or 70S ribosomes.

Its subcellular location is the cytoplasm. Its function is as follows. One of several proteins that assist in the late maturation steps of the functional core of the 30S ribosomal subunit. Associates with free 30S ribosomal subunits (but not with 30S subunits that are part of 70S ribosomes or polysomes). Required for efficient processing of 16S rRNA. May interact with the 5'-terminal helix region of 16S rRNA. This chain is Ribosome-binding factor A, found in Escherichia coli O127:H6 (strain E2348/69 / EPEC).